Here is a 360-residue protein sequence, read N- to C-terminus: Peptide chain release factor 1 (360 aa).

Gln-235 bears the N5-methylglutamine mark.

This sequence belongs to the prokaryotic/mitochondrial release factor family. Methylated by PrmC. Methylation increases the termination efficiency of RF1.

It is found in the cytoplasm. In terms of biological role, peptide chain release factor 1 directs the termination of translation in response to the peptide chain termination codons UAG and UAA. This chain is Peptide chain release factor 1, found in Mannheimia succiniciproducens (strain KCTC 0769BP / MBEL55E).